We begin with the raw amino-acid sequence, 1139 residues long: Protein lin-25 (1139 aa).

The short motif at 695 to 701 (IKKKKDP) is the Nuclear localization signal element.

Expressed in seam cells and all six vulva precursor cells (VPC). After VPC division, expression is restricted to descendants of the VPC cell lineages P5.p, P6.p and P7.p (at protein level).

It localises to the nucleus. The protein localises to the cytoplasm. Its function is as follows. Participates in the inductive signaling pathway downstream of let-60 Ras and the RAF/MAP kinase cascade to regulate specification and differentiation of many cell types. Positively regulates the fate of vulval precursor cells. Required for induction of the P12 and excretory duct cell fates. In males, it is also required for proper formation of spicules. Does not function in the signaling pathway that promotes exit from pachytene. Plays a role in responses to M.nematophilum-mediated bacterial infection by promoting tail swelling and preventing constipation. The sequence is that of Protein lin-25 (lin-25) from Caenorhabditis elegans.